Reading from the N-terminus, the 601-residue chain is tRNA 5-methylaminomethyl-2-thiouridine biosynthesis bifunctional protein MnmC (601 aa).

The interval 1-237 (MSDPTASPLI…KKQRLEAVAP (237 aa)) is tRNA (mnm(5)s(2)U34)-methyltransferase. The interval 252–601 (IGGGIAGAAM…FSSRVATGAV (350 aa)) is FAD-dependent cmnm(5)s(2)U34 oxidoreductase.

In the N-terminal section; belongs to the methyltransferase superfamily. tRNA (mnm(5)s(2)U34)-methyltransferase family. The protein in the C-terminal section; belongs to the DAO family. FAD is required as a cofactor.

It localises to the cytoplasm. It catalyses the reaction 5-aminomethyl-2-thiouridine(34) in tRNA + S-adenosyl-L-methionine = 5-methylaminomethyl-2-thiouridine(34) in tRNA + S-adenosyl-L-homocysteine + H(+). In terms of biological role, catalyzes the last two steps in the biosynthesis of 5-methylaminomethyl-2-thiouridine (mnm(5)s(2)U) at the wobble position (U34) in tRNA. Catalyzes the FAD-dependent demodification of cmnm(5)s(2)U34 to nm(5)s(2)U34, followed by the transfer of a methyl group from S-adenosyl-L-methionine to nm(5)s(2)U34, to form mnm(5)s(2)U34. In Caulobacter sp. (strain K31), this protein is tRNA 5-methylaminomethyl-2-thiouridine biosynthesis bifunctional protein MnmC.